Consider the following 470-residue polypeptide: Cysteine--tRNA ligase (470 aa).

Position 46 (Cys-46) interacts with Zn(2+). The short motif at 48 to 58 (PTVYDLAHIGN) is the 'HIGH' region element. Cys-230, His-255, and Glu-259 together coordinate Zn(2+). The short motif at 288–292 (KMSKS) is the 'KMSKS' region element. Residue Lys-291 coordinates ATP.

The protein belongs to the class-I aminoacyl-tRNA synthetase family. In terms of assembly, monomer. It depends on Zn(2+) as a cofactor.

It localises to the cytoplasm. It catalyses the reaction tRNA(Cys) + L-cysteine + ATP = L-cysteinyl-tRNA(Cys) + AMP + diphosphate. In Granulibacter bethesdensis (strain ATCC BAA-1260 / CGDNIH1), this protein is Cysteine--tRNA ligase.